The sequence spans 715 residues: Discoidin, CUB and LCCL domain-containing protein 1 (715 aa).

Residues 1-34 (MVPGARGGGALARAAGRGLLALLLAVSAPLRLQA) form the signal peptide. The Extracellular segment spans residues 35–459 (EELGDGCGHL…TSTGINITTV (425 aa)). Disulfide bonds link Cys41-Cys68 and Cys94-Cys112. The region spanning 41–150 (CGHLVTYQDS…RGFLLTYASS (110 aa)) is the CUB domain. N-linked (GlcNAc...) asparagine glycosylation occurs at Asn64. The N-linked (GlcNAc...) asparagine glycan is linked to Asn124. The region spanning 152 to 248 (HPDLITCLER…RDGSLSDKRF (97 aa)) is the LCCL domain. 2 cysteine pairs are disulfide-bonded: Cys158–Cys174 and Cys178–Cys200. The 165-residue stretch at 248–412 (FLFTSNGCSR…IALKVELIGC (165 aa)) folds into the F5/8 type C domain. N-linked (GlcNAc...) asparagine glycosylation occurs at Asn277. The tract at residues 278-312 (ESGDQVHWSPGQARLQDQGPSWASGDSSNNHKPRE) is disordered. A compositionally biased stretch (polar residues) spans 295-307 (QGPSWASGDSSNN). N-linked (GlcNAc...) asparagine glycans are attached at residues Asn351, Asn418, and Asn455. A helical membrane pass occupies residues 460-480 (AIPLVLLVVLVFAGMGIFAAF). Topologically, residues 481-715 (RKKKKKGSPY…LNQTAMTALL (235 aa)) are cytoplasmic. Position 513 is a phosphoserine (Ser513). A Phosphothreonine modification is found at Thr614. The tract at residues 619 to 702 (SGYRVPGPQP…SDSYSAPRDC (84 aa)) is disordered.

The protein resides in the membrane. The polypeptide is Discoidin, CUB and LCCL domain-containing protein 1 (DCBLD1) (Homo sapiens (Human)).